Reading from the N-terminus, the 303-residue chain is Probable 5-dehydro-4-deoxyglucarate dehydratase (303 aa).

The protein belongs to the DapA family.

The enzyme catalyses 5-dehydro-4-deoxy-D-glucarate + H(+) = 2,5-dioxopentanoate + CO2 + H2O. It functions in the pathway carbohydrate acid metabolism; D-glucarate degradation; 2,5-dioxopentanoate from D-glucarate: step 2/2. This Acidovorax ebreus (strain TPSY) (Diaphorobacter sp. (strain TPSY)) protein is Probable 5-dehydro-4-deoxyglucarate dehydratase.